The sequence spans 177 residues: Large ribosomal subunit protein uL6 (177 aa).

Belongs to the universal ribosomal protein uL6 family. As to quaternary structure, part of the 50S ribosomal subunit.

Its function is as follows. This protein binds to the 23S rRNA, and is important in its secondary structure. It is located near the subunit interface in the base of the L7/L12 stalk, and near the tRNA binding site of the peptidyltransferase center. The sequence is that of Large ribosomal subunit protein uL6 from Haemophilus ducreyi (strain 35000HP / ATCC 700724).